Consider the following 134-residue polypeptide: uncharacterized protein (134 aa).

A run of 3 helical transmembrane segments spans residues 26 to 46 (VAVF…GNIG), 55 to 75 (LLKF…QIIV), and 101 to 121 (YAPM…GLIL).

Its subcellular location is the membrane. This is an uncharacterized protein from Dictyostelium discoideum (Social amoeba).